The following is a 287-amino-acid chain: Glycine--tRNA ligase alpha subunit (287 aa).

Belongs to the class-II aminoacyl-tRNA synthetase family. In terms of assembly, tetramer of two alpha and two beta subunits.

The protein resides in the cytoplasm. It catalyses the reaction tRNA(Gly) + glycine + ATP = glycyl-tRNA(Gly) + AMP + diphosphate. The polypeptide is Glycine--tRNA ligase alpha subunit (Campylobacter jejuni subsp. jejuni serotype O:6 (strain 81116 / NCTC 11828)).